The chain runs to 314 residues: Oxaloacetate tautomerase FAHD2B, mitochondrial (314 aa).

A mitochondrion-targeting transit peptide spans 1–84; it reads MLVSGRRRLL…ATLSVARRAL (84 aa). Positions 159, 161, and 190 each coordinate Mg(2+).

Belongs to the FAH family. Requires Mg(2+) as cofactor. Mn(2+) is required as a cofactor.

It is found in the mitochondrion. The enzyme catalyses oxaloacetate = enol-oxaloacetate. Functionally, tautomerase that converts enol-oxaloacetate, a strong inhibitor of succinate dehydrogenase, to the physiological keto form of oxaloacetate. It is thereby required to maximize aerobic respiration efficiency by preventing succinate dehydrogenase inhibition. This Homo sapiens (Human) protein is Oxaloacetate tautomerase FAHD2B, mitochondrial.